A 294-amino-acid chain; its full sequence is Foldase protein PrsA 1 (294 aa).

A signal peptide spans 1-21 (MTKLKKVMISVIAATLLLLAG). A lipid anchor (N-palmitoyl cysteine) is attached at Cys-22. Cys-22 carries the S-diacylglycerol cysteine lipid modification. A PpiC domain is found at 135–226 (EPDITVRHIL…YGYHLIQLVK (92 aa)).

This sequence belongs to the PrsA family.

It localises to the cell membrane. It catalyses the reaction [protein]-peptidylproline (omega=180) = [protein]-peptidylproline (omega=0). In terms of biological role, plays a major role in protein secretion by helping the post-translocational extracellular folding of several secreted proteins. The sequence is that of Foldase protein PrsA 1 from Listeria monocytogenes serotype 4b (strain F2365).